The sequence spans 752 residues: Conserved oligomeric Golgi complex subunit 6 (752 aa).

3 disordered regions span residues 1–36, 601–620, and 702–736; these read MASY…RSNA, SSTN…KQPQ, and VTRD…GLGL. Residues 9-25 are compositionally biased toward low complexity; the sequence is AASSHVSTRSSSPASSP. A compositionally biased stretch (polar residues) spans 601-619; sequence SSTNGPSDTANDGQQQKQP. The segment covering 702 to 721 has biased composition (basic and acidic residues); the sequence is VTRDRAVEDDSASDSDKDKD.

It belongs to the COG6 family.

The protein resides in the golgi apparatus membrane. Functionally, acts as a component of the peripheral membrane COG complex that is involved in intra-Golgi protein trafficking. COG is located at the cis-Golgi, and regulates tethering of retrograde intra-Golgi vesicles and possibly a number of other membrane trafficking events. In Aspergillus terreus (strain NIH 2624 / FGSC A1156), this protein is Conserved oligomeric Golgi complex subunit 6 (cog6).